Here is a 269-residue protein sequence, read N- to C-terminus: F-box protein At5g52880 (269 aa).

The F-box domain occupies 109–155 (DIDIPSLPQDILIHIFSFLEISSLVSSAQVSRSWNQATHENSLWQSQ).

This chain is F-box protein At5g52880, found in Arabidopsis thaliana (Mouse-ear cress).